Consider the following 471-residue polypeptide: Putative multidrug resistance protein MdtD (471 aa).

The Periplasmic portion of the chain corresponds to 1–11 (MTDLPDSTRWQ). Residues 12 to 32 (LWIVAFGFFMQSLDTTIVNTA) form a helical membrane-spanning segment. Topologically, residues 33–48 (LPSMAQSLGESPLHMH) are cytoplasmic. A helical membrane pass occupies residues 49-69 (MVIVSYVLTVAVMLPASGWLA). At 70–76 (DKVGVRN) the chain is on the periplasmic side. The helical transmembrane segment at 77 to 97 (IFFTAIVLFTLGSLFCALSAT) threads the bilayer. Residues 98–101 (LNEL) are Cytoplasmic-facing. The helical transmembrane segment at 102–124 (LLARALQGVGGAMMVPVGRLTVM) threads the bilayer. The Periplasmic segment spans residues 125–137 (KIVPREQYMAAMT). Residues 138–158 (FVTLPGQVGPLLGPALGGLLV) traverse the membrane as a helical segment. Residues 159–164 (EYASWH) lie on the Cytoplasmic side of the membrane. The helical transmembrane segment at 165-185 (WIFLINIPVGIIGAIATLMLM) threads the bilayer. Residues 186–196 (PNYTMQTRRFD) are Periplasmic-facing. A helical transmembrane segment spans residues 197-217 (LSGFLLLAVGMAVLTLALDGS). The Cytoplasmic segment spans residues 218 to 224 (KGTGLSP). Residues 225–245 (LAIAGLAAIGVVALVLYLLHA) form a helical membrane-spanning segment. At 246 to 262 (RNNNRALFSLKLFRTRT) the chain is on the periplasmic side. A helical transmembrane segment spans residues 263–283 (FSLGLAGSFAGRIGSGMLPFM). The Cytoplasmic portion of the chain corresponds to 284–285 (TP). A helical membrane pass occupies residues 286–306 (VFLQIGLGFSPFHAGLMMIPM). At 307–341 (VLGSMGMKRIVVQVVNRFGYRRVLVATTLGLSLVT) the chain is on the periplasmic side. A helical membrane pass occupies residues 342–362 (LLFMTTALLGWYYVLPFVLFL). Residues 363 to 395 (QGMVNSTRFSSMNTLTLKDLPDNLASSGNSLLS) are Cytoplasmic-facing. A helical transmembrane segment spans residues 396–416 (MIMQLSMSIGVTIAGLLLGLF). Over 417-430 (GSQHVSVDSSTTQT) the chain is Periplasmic. The helical transmembrane segment at 431-451 (VFMYTWLSMALIIALPAFIFA) threads the bilayer. The Cytoplasmic portion of the chain corresponds to 452–471 (RVPNDTHQNVAISRRKRSAQ).

It belongs to the major facilitator superfamily. TCR/Tet family.

The protein localises to the cell inner membrane. The polypeptide is Putative multidrug resistance protein MdtD (Escherichia fergusonii (strain ATCC 35469 / DSM 13698 / CCUG 18766 / IAM 14443 / JCM 21226 / LMG 7866 / NBRC 102419 / NCTC 12128 / CDC 0568-73)).